The following is a 683-amino-acid chain: Glucosylceramidase (683 aa).

Glu-254 serves as the catalytic Proton donor. Glu-483 acts as the Nucleophile in catalysis.

Belongs to the glycosyl hydrolase 5 (cellulase A) family.

It is found in the membrane. It carries out the reaction a beta-D-glucosyl-(1&lt;-&gt;1')-N-acylsphing-4-enine + H2O = an N-acylsphing-4-enine + D-glucose. Its activity is regulated as follows. Inhibited by metal cations Co(2+), Cu(2+), Ni(2+), Pb(2+) and Zn(2+). Not inhibited by metal chelator ethylenediaminetetraacetic acid (EDTA). Specifically hydrolyzes the glucosidic linkage in glucosylceramide. May prevent accumulation of aberrent glucosylceramide containing immature ceramide. This Rhizopus delemar (strain RA 99-880 / ATCC MYA-4621 / FGSC 9543 / NRRL 43880) (Mucormycosis agent) protein is Glucosylceramidase.